A 146-amino-acid polypeptide reads, in one-letter code: Leptin (146 aa).

Residues Cys-96 and Cys-146 are joined by a disulfide bond.

It belongs to the leptin family.

Its subcellular location is the secreted. Functionally, key player in the regulation of energy balance and body weight control. Once released into the circulation, has central and peripheral effects by binding LEPR, found in many tissues, which results in the activation of several major signaling pathways. In the hypothalamus, acts as an appetite-regulating factor that induces a decrease in food intake and an increase in energy consumption by inducing anorexinogenic factors and suppressing orexigenic neuropeptides, also regulates bone mass and secretion of hypothalamo-pituitary-adrenal hormones. In the periphery, increases basal metabolism, influences reproductive function, regulates pancreatic beta-cell function and insulin secretion, is pro-angiogenic for endothelial cell and affects innate and adaptive immunity. In the arcuate nucleus of the hypothalamus, activates by depolarization POMC neurons inducing FOS and SOCS3 expression to release anorexigenic peptides and inhibits by hyperpolarization NPY neurons inducing SOCS3 with a consequent reduction on release of orexigenic peptides. In addition to its known satiety inducing effect, has a modulatory role in nutrient absorption. In the intestine, reduces glucose absorption by enterocytes by activating PKC and leading to a sequential activation of p38, PI3K and ERK signaling pathways which exerts an inhibitory effect on glucose absorption. Acts as a growth factor on certain tissues, through the activation of different signaling pathways increases expression of genes involved in cell cycle regulation such as CCND1, via JAK2-STAT3 pathway, or VEGFA, via MAPK1/3 and PI3K-AKT1 pathways. May also play an apoptotic role via JAK2-STAT3 pathway and up-regulation of BIRC5 expression. Pro-angiogenic, has mitogenic activity on vascular endothelial cells and plays a role in matrix remodeling by regulating the expression of matrix metalloproteinases (MMPs) and tissue inhibitors of metalloproteinases (TIMPs). In innate immunity, modulates the activity and function of neutrophils by increasing chemotaxis and the secretion of oxygen radicals. Increases phagocytosis by macrophages and enhances secretion of pro-inflammatory mediators. Increases cytotoxic ability of NK cells. Plays a pro-inflammatory role, in synergy with IL1B, by inducing NOS2 which promotes the production of IL6, IL8 and Prostaglandin E2, through a signaling pathway that involves JAK2, PI3K, MAP2K1/MEK1 and MAPK14/p38. In adaptive immunity, promotes the switch of memory T-cells towards T helper-1 cell immune responses. Increases CD4(+)CD25(-) T-cell proliferation and reduces autophagy during TCR (T-cell receptor) stimulation, through MTOR signaling pathway activation and BCL2 up-regulation. This is Leptin (LEP) from Ovis aries (Sheep).